A 1013-amino-acid chain; its full sequence is A-type ATP synthase subunit A (1013 aa).

The DOD-type homing endonuclease domain occupies 392–525 (FLGYVIGDGT…LTYLLAKLGI (134 aa)).

The protein belongs to the ATPase alpha/beta chains family. As to quaternary structure, has multiple subunits with at least A(3), B(3), C, D, E, F, H, I and proteolipid K(x). Post-translationally, this protein undergoes a protein self splicing that involves a post-translational excision of the VDE intervening region (intein) followed by peptide ligation.

The protein resides in the cell membrane. It carries out the reaction ATP + H2O + 4 H(+)(in) = ADP + phosphate + 5 H(+)(out). Functionally, component of the A-type ATP synthase that produces ATP from ADP in the presence of a proton gradient across the membrane. The A chain is the catalytic subunit. This chain is A-type ATP synthase subunit A, found in Pyrococcus furiosus (strain ATCC 43587 / DSM 3638 / JCM 8422 / Vc1).